The sequence spans 2014 residues: Fatty acid synthase beta subunit pigK (2014 aa).

The segment at 144-515 (LAAVFGGQST…KDGQGVRVII (372 aa)) is acetyltransferase (AT) domain. S263 functions as the For acetyltransferase activity in the catalytic mechanism. An enoyl reductase (ER) domain region spans residues 570–815 (SRLLDTPPLM…LITEASGVSD (246 aa)). Residues 1126–1606 (RSGSPWIHAL…LPGDRLLVNV (481 aa)) are dehydratase (DH) domain. The region spanning 1514-1627 (PGWPGVSSLE…FNVSAFKQAT (114 aa)) is the MaoC-like domain. The malonyl/palmitoyl transferase (MT/PT) domain stretch occupies residues 1645-2005 (FFFTGQGSQK…VREVFNITQS (361 aa)). Catalysis depends on S1790, which acts as the For malonyltransferase activity.

This sequence belongs to the fungal fatty acid synthetase subunit beta family. In terms of assembly, [Alpha(6)beta(6)] hexamers of two multifunctional subunits (alpha and beta).

It carries out the reaction acetyl-CoA + n malonyl-CoA + 2n NADPH + 4n H(+) = a long-chain-acyl-CoA + n CoA + n CO2 + 2n NADP(+).. The enzyme catalyses holo-[ACP] + acetyl-CoA = acetyl-[ACP] + CoA. The catalysed reaction is holo-[ACP] + malonyl-CoA = malonyl-[ACP] + CoA. It catalyses the reaction a (3R)-hydroxyacyl-[ACP] = a (2E)-enoyl-[ACP] + H2O. It carries out the reaction a 2,3-saturated acyl-[ACP] + NAD(+) = a (2E)-enoyl-[ACP] + NADH + H(+). The enzyme catalyses (9Z)-octadecenoyl-[ACP] + H2O = (9Z)-octadecenoate + holo-[ACP] + H(+). It participates in secondary metabolite biosynthesis. In terms of biological role, fatty acid synthase subunit beta; part of the gene cluster that mediates the biosynthesis of azaphilone pigments (MonAzPs), a complex mixture of compounds with a common azaphilone skeleton very widely used as food colorants. PigJ and pigK form the two subunits of a dedicated fungal fatty acid synthase (FAS) that produces the side chain fatty acyl moiety of MonAzPs, a beta-keto fatty acid. The chain length control of the pigJ-pigK FAS is somewhat flexible as MonAzPs features either a beta-ketooctanoic or a beta-ketodecanoic acid moiety. The beta-ketoacyl-ACP probably serves as the substrate for the acetyltransferase pigD that directly transfers the fatty acyl chain to the C-4 alcohol of the pyran ring. The first step of the pathway is performed by the nrPKS pigA that forms the hexaketide precursor from successive condensations of five malonyl-CoA units, with a simple acetyl-CoA starter unit. The role of esterase pigG is not clear, but it may play at most a supplementary role in the formation of the benzaldehyde produced by the pigA nrPKS. This very reactive benzaldehyde is intercepted by the pigC ketoreductase that to provide the first stable enzyme-free MonAzPs intermediate, 6-(4-hydroxy-2-oxopentyl)-3-methyl-2,4-dioxocyclohexane carbaldehyde, also known as M7PKS-1. The FAD-dependent monooxygenase pigN hydroxylates M7PKS-1 at C-4, which triggers the formation of the pyran ring. PigJ, pigK and pigD are involved in the acetylation of the pyran ring. PigJ and pigK form the two subunits of a dedicated fungal FAS that produces the side chain fatty acyl moiety of MonAzPs and pigD transfers the fatty acyl chain to the C-4 alcohol. PigM and pigO are involved in the elimination of the omega-1 alcohol. PigM acts as an O-acetyltransferase that synthesizes the putative O-11 acetyl intermediate whereas pigO eliminates acetic acid to yield an intermediate with a C10(11) double bond. The dehydration of the C-11 alcohol followed by the reduction of the C6(7) double bond by the NAD(P)H-dependent oxidoreductase pigE increases the electrophilicity of the C-5 ketone of the resulting acyl benzopyran. This in turn sets up the C-5 ketone for an intramolecular Knoevenagel aldol condensation with the C-20 enol of the side chain. This condensation affords the characteristic linear tricyclic carbon skeletons of the yellow pigments that serve as the common precursors for the classical yellow pigments monascin and ankaflavin, orange pigments rubopunctatin and monascorubrin, and red pigments ribropunctamine and monascorubramine. The FAD-dependent oxidoreductase pigF is especially invoved in the biosynthesis of orange and red pigments via desaturation of C6(7). This chain is Fatty acid synthase beta subunit pigK, found in Monascus ruber (Mold).